The following is a 393-amino-acid chain: Thermostable carboxypeptidase 2 (393 aa).

Positions 104, 109, and 245 each coordinate Zn(2+). Y302 acts as the Proton donor in catalysis. The active-site Nucleophile is the E373.

The protein belongs to the peptidase M20 family. As to quaternary structure, homotetramer. Requires Zn(2+) as cofactor.

Its function is as follows. Can release basic, acidic, aromatic, and, to a lesser extent, aliphatic amino acids. This chain is Thermostable carboxypeptidase 2 (cpsA2), found in Saccharolobus solfataricus (strain ATCC 35092 / DSM 1617 / JCM 11322 / P2) (Sulfolobus solfataricus).